Consider the following 95-residue polypeptide: MTKSELIERLASQQSHIPAKAVEDAVKEMLEHMASTLAQGERIEIRGFGSFSLHYRAPRTGRNPKTGDKVELEGKYVPHFKPGKELRDRANIYEG.

Belongs to the bacterial histone-like protein family. In terms of assembly, heterodimer of an alpha and a beta chain.

This protein is one of the two subunits of integration host factor, a specific DNA-binding protein that functions in genetic recombination as well as in transcriptional and translational control. This is Integration host factor subunit beta from Klebsiella pneumoniae subsp. pneumoniae (strain ATCC 700721 / MGH 78578).